The chain runs to 91 residues: DNA-directed RNA polymerase subunit Rpo11 (91 aa).

The protein belongs to the archaeal Rpo11/eukaryotic RPB11/RPC19 RNA polymerase subunit family. Part of the RNA polymerase complex.

The protein localises to the cytoplasm. The catalysed reaction is RNA(n) + a ribonucleoside 5'-triphosphate = RNA(n+1) + diphosphate. In terms of biological role, DNA-dependent RNA polymerase (RNAP) catalyzes the transcription of DNA into RNA using the four ribonucleoside triphosphates as substrates. The polypeptide is DNA-directed RNA polymerase subunit Rpo11 (Methanothrix thermoacetophila (strain DSM 6194 / JCM 14653 / NBRC 101360 / PT) (Methanosaeta thermophila)).